Reading from the N-terminus, the 176-residue chain is Oleosin Ara h 14.0102 (176 aa).

An N-acetylalanine; alternate modification is found at Ala2. 2 helical membrane-spanning segments follow: residues 61–81 (GTLL…LAIA) and 87–107 (FFSP…IGIL). Residues 156 to 176 (KTKDAGQEIQTKAQDVKRSSS) form a disordered region.

The protein belongs to the oleosin family. In terms of assembly, homodimer. Forms oligomers. Expressed in seeds (at protein level). Not expressed in leaves.

Its subcellular location is the lipid droplet. The protein resides in the membrane. Functionally, may have a structural role to stabilize the lipid body during desiccation of the seed by preventing coalescence of the oil. Probably interacts with both lipid and phospholipid moieties of lipid bodies. May also provide recognition signals for specific lipase anchorage in lipolysis during seedling growth. This Arachis hypogaea (Peanut) protein is Oleosin Ara h 14.0102.